The chain runs to 220 residues: UPF0319 protein YccT (220 aa).

Positions 1 to 20 (MKTGALATFLALCLPATVFA) are cleaved as a signal peptide.

The protein belongs to the UPF0319 family.

This Salmonella heidelberg (strain SL476) protein is UPF0319 protein YccT.